The chain runs to 533 residues: Protein transport protein SEC9 (533 aa).

Disordered stretches follow at residues 1–32, 68–184, 200–246, and 259–284; these read MGFK…IATK, RPGA…MNAT, MAQD…KRAP, and PTNE…GQAP. The span at 11-24 shows a compositional bias: basic and acidic residues; that stretch reads PPEEDTPERNRDLL. A compositionally biased stretch (polar residues) spans 92–102; sequence GNTSRVGQPQQ. Residues 157-172 show a composition bias toward gly residues; the sequence is GGPGNPYGGSTAGAGT. Residues 227–240 are compositionally biased toward low complexity; sequence RPQAAAETPRPQAA. T-SNARE coiled-coil homology domains lie at 318-380 and 470-532; these read RFTK…VAEL and DEME…LTNI.

Belongs to the SNAP-25 family.

This Eremothecium gossypii (strain ATCC 10895 / CBS 109.51 / FGSC 9923 / NRRL Y-1056) (Yeast) protein is Protein transport protein SEC9 (SEC9).